The following is a 193-amino-acid chain: Tellurium resistance protein TerZ (193 aa).

The protein belongs to the CAPAB/TerDEXZ family.

Its function is as follows. Not known; seems to contribute to the tellurium resistance (Ter) mechanism. Also involved in phage inhibition (Phi) and colicin resistance (PacB). This is Tellurium resistance protein TerZ (terZ) from Serratia marcescens.